A 177-amino-acid polypeptide reads, in one-letter code: Large ribosomal subunit protein uL6 (177 aa).

It belongs to the universal ribosomal protein uL6 family. In terms of assembly, part of the 50S ribosomal subunit.

This protein binds to the 23S rRNA, and is important in its secondary structure. It is located near the subunit interface in the base of the L7/L12 stalk, and near the tRNA binding site of the peptidyltransferase center. The sequence is that of Large ribosomal subunit protein uL6 from Rhodospirillum centenum (strain ATCC 51521 / SW).